Here is a 454-residue protein sequence, read N- to C-terminus: Glutamyl-tRNA(Gln) amidotransferase subunit A (454 aa).

Residues lysine 56 and serine 131 each act as charge relay system in the active site. The active-site Acyl-ester intermediate is the serine 155.

It belongs to the amidase family. GatA subfamily. As to quaternary structure, heterotrimer of A, B and C subunits.

The enzyme catalyses L-glutamyl-tRNA(Gln) + L-glutamine + ATP + H2O = L-glutaminyl-tRNA(Gln) + L-glutamate + ADP + phosphate + H(+). Allows the formation of correctly charged Gln-tRNA(Gln) through the transamidation of misacylated Glu-tRNA(Gln) in organisms which lack glutaminyl-tRNA synthetase. The reaction takes place in the presence of glutamine and ATP through an activated gamma-phospho-Glu-tRNA(Gln). The polypeptide is Glutamyl-tRNA(Gln) amidotransferase subunit A (Campylobacter lari (strain RM2100 / D67 / ATCC BAA-1060)).